The sequence spans 148 residues: Probable transporter PD_1893 (148 aa).

4 helical membrane passes run 11–31 (FTVA…SEMI), 48–68 (NPSL…GMAL), 93–113 (IVFG…CPGP), and 118–138 (LSTG…GMII).

The protein belongs to the TsuA/YedE (TC 9.B.102) family.

It is found in the cell inner membrane. The sequence is that of Probable transporter PD_1893 from Xylella fastidiosa (strain Temecula1 / ATCC 700964).